Reading from the N-terminus, the 294-residue chain is P32 adhesin (294 aa).

Helical transmembrane passes span 11 to 31 (LVGVSFVFSGVIALGTGVGLT) and 66 to 86 (VVGAGAGLIVVSLLLGLGIGI). Tandem repeats lie at residues 172 to 193 (GGPMQPNQMGMRPGFNQMPPQM) and 194 to 214 (GGMPPNQMGMRPGFNQMPPQM). The segment at 172-214 (GGPMQPNQMGMRPGFNQMPPQMGGMPPNQMGMRPGFNQMPPQM) is 2 X 22 AA repeats. The tract at residues 234-294 (RPGFRPQPGG…AGFPPQNGPR (61 aa)) is disordered. Positions 241–256 (PGGGVPMGNKAGGGFN) are enriched in gly residues.

It localises to the cell projection. The protein localises to the attachment organelle membrane. In terms of biological role, adhesin necessary for successful cytadherence and virulence. In Mycoplasmoides gallisepticum (strain R(low / passage 15 / clone 2)) (Mycoplasma gallisepticum), this protein is P32 adhesin (mgc2).